The following is a 1551-amino-acid chain: Dual oxidase 1 (1551 aa).

The N-terminal stretch at 1 to 21 (MGFCLALTWTFLVGSWTSMGA) is a signal peptide. Residues 22 to 596 (QKPISWEVQR…YFEGSGFGFG (575 aa)) are Extracellular-facing. Residues 26–593 (SWEVQRFDGW…MQDYFEGSGF (568 aa)) are peroxidase-like; mediates peroxidase activity. An N-linked (GlcNAc...) asparagine glycan is attached at Asn94. Positions 197 to 222 (LASGPDPAFPRNAQPPLLMWSAPDPA) are disordered. Residues Asn342, Asn354, Asn461, and Asn534 are each glycosylated (N-linked (GlcNAc...) asparagine). A helical membrane pass occupies residues 597-617 (VTIGTLCCFPLVSLLSAWIVA). Residues 618-1044 (RLRKKNFKKL…KRFIENYRRH (427 aa)) are Cytoplasmic-facing. 3 consecutive EF-hand domains span residues 815–850 (PQDM…FMKG), 851–886 (SPEE…FIEI), and 895–930 (QLTE…HDSE). Ca(2+) is bound by residues Asp828, Asp830, Asn832, Tyr834, Glu839, Asp864, Asp866, Asn868, and Glu875. The tract at residues 956–1248 (YISQEKICPS…GSFGLIQLPR (293 aa)) is interaction with TXNDC11. The helical transmembrane segment at 1045–1065 (IGCVAVFYAITGGLFLERAYY) threads the bilayer. At 1066–1080 (YAFGAHHMGITDTTR) the chain is on the extracellular side. A helical transmembrane segment spans residues 1081–1101 (VGIILSRGTAASISFMFSYIL). The region spanning 1087 to 1269 (RGTAASISFM…YVGDKLVSLS (183 aa)) is the Ferric oxidoreductase domain. Residues 1102-1151 (LTMCRNLITFLRETFLNRYVPFDAAVDFHRLIASTAIVLTVLHSAGHVVN) lie on the Cytoplasmic side of the membrane. A helical membrane pass occupies residues 1152 to 1172 (VYLFSISPLSVLSCLFPGLFH). At 1173–1188 (NDGSEFPQKYYWWFFQ) the chain is on the extracellular side. Residues 1189–1209 (TVPGLTGVMLLLVLAIMYVFA) traverse the membrane as a helical segment. The Cytoplasmic portion of the chain corresponds to 1210–1226 (SHHFRRHSFRGFWLTHH). A helical transmembrane segment spans residues 1227–1247 (LYILLYVLLIIHGSFGLIQLP). Residue Arg1248 is a topological domain, extracellular. The chain crosses the membrane as a helical span at residues 1249–1269 (FHIFFLVPALIYVGDKLVSLS). Positions 1270-1376 (RKKVEISVVK…DGPFGEGHQE (107 aa)) constitute an FAD-binding FR-type domain. Residues 1270–1551 (RKKVEISVVK…THFSHHYENF (282 aa)) are Cytoplasmic-facing.

This sequence in the N-terminal section; belongs to the peroxidase family. In terms of assembly, interacts with TPO and CYBA. Interacts with TXNDC11. Post-translationally, N-glycosylated. Expressed in thyrocytes (at protein level). Specifically expressed in thyroid.

The protein localises to the apical cell membrane. The catalysed reaction is NADH + O2 + H(+) = H2O2 + NAD(+). The enzyme catalyses NADPH + O2 + H(+) = H2O2 + NADP(+). It participates in hormone biosynthesis; thyroid hormone biosynthesis. With respect to regulation, peroxidase activity is inhibited by aminobenzohydrazide. The NADPH oxidase activity is calcium-dependent. In terms of biological role, generates hydrogen peroxide which is required for the activity of thyroid peroxidase/TPO and lactoperoxidase/LPO. Plays a role in thyroid hormones synthesis and lactoperoxidase-mediated antimicrobial defense at the surface of mucosa. May have its own peroxidase activity through its N-terminal peroxidase-like domain. This chain is Dual oxidase 1 (DUOX1), found in Canis lupus familiaris (Dog).